A 1309-amino-acid chain; its full sequence is MSGQLVQWKSSPDRVTQSAIKEALHSPLADGDMNEMNVPVDPLENKVNSTNIIEGSPKANPNPVKFMNTSEIFQKSLGLLDESPRHDDELNIEVGDNDRPNANILHNERTPDLDRIANFFKSNRTPGKENLLTKYQSSDLEDTPLMLRKKMTFQTPTDPLEQKTFKKLKSDTGFCYYGEQNDGEENASLEVTEADATFVQMAERSADNYDCALEGIVTPKRYKDELSKSGGMQDERVQKTQIMISAESPNSISSYDKNKITGNGRTTRNVNKVFNNNEDNIGAIEEKNPVKKKSENYSSDDLRERNNQIIQSNESEEINELEKNLNVSGRENDVNNLDIDINSAVSGTPSRNNAEEEMYSSESVNNREPSKKWIFRYSKDKTENNSNRSTQIVNNPRTQEMPLDSISIDTQPLSKSFNTETNNELETQIIVSSLSQGISAQKGPVFHSTGQTEEIKTQIINSPEQNALNATFETPVTLSRINFEPILEVPETSSPSKNTMSKPSNSSPIPKEKDTFNIHEREVETNNVFSNDIQNSSNAATRDDIIIAGSSDFNEQKEITDRIYLQLSGKQISDSGSDETERMSPNELDTKKESTIMSEVELTQELPEVEEQQDLQTSPKKLVVEEETLMEIKKSKGNSLQLHDDNKECNSDKQDGTESLDVALIEHESKGQSSELQKNLMQLFPSESQEIIQNRRTIKRRQKDTIEIGEEEENRSTKTSPTKHLKRNSDLDAASIKREPSCSITIQTGETGSGKDSKEQSYVFPEGIRTADNSFLSKDDIIFGNAVWCQYTWNYKFYPGILLEVDTNQDGCWIYFETGRSLTKDEDIYYLDIRIGDAVTFDGNEYVVVGLECRSHDLNIIRCIRGYDTVHLKKKNASGLLGKRTLIKALSSISLDLSEWAKRAKIILEDNEKNKGDAYRYLRHPIRGRKSMTNVLSPKKHTDDEKDINTHTEVYNNEIESSSEKKEIVKKDSRDALAEHAGAPSLLFSSGEIRTGNVFDKCIFVLTSLFENREELRQTIESQGGTVIESGFSTLFNFTHPLAKSLVNKGNTDNIRELALKLAWKPHSLFADCRFACLITKRHLRSLKYLETLALGWPTLHWKFISACIEKKRIVPHLIYQYLLPSGESFRLSLDSPSKGGIIKSNNIFSFYTQFLRGSNLRDQICGVKKMLNDYIVIVWGRSELDSFVKFAFACLSAGRMLTIDLPNIDVDDTEPLLNALDSLVPRIGSELSNRKLKFLIYANENNGKSQMKLLERLRSQISLKFKKFNYIFHTESKEWLIQTIINEDTGFHDDITDNDIYNTISEVR.

Positions 1-19 are enriched in polar residues; sequence MSGQLVQWKSSPDRVTQSA. Positions 1–39 are disordered; the sequence is MSGQLVQWKSSPDRVTQSAIKEALHSPLADGDMNEMNVP. Phosphoserine occurs at positions 26, 56, and 205. Phosphothreonine is present on Thr-218. Position 248 is a phosphoserine (Ser-248). Residues 280 to 299 form a disordered region; it reads NIGAIEEKNPVKKKSENYSS. Over residues 284–299 the composition is skewed to basic and acidic residues; sequence IEEKNPVKKKSENYSS. 2 positions are modified to phosphoserine: Ser-312 and Ser-315. The tract at residues 342–365 is disordered; sequence NSAVSGTPSRNNAEEEMYSSESVN. The span at 343–352 shows a compositional bias: polar residues; the sequence is SAVSGTPSRN. Ser-462 is subject to Phosphoserine. Thr-471 and Thr-474 each carry phosphothreonine. Positions 490–512 are disordered; it reads PETSSPSKNTMSKPSNSSPIPKE. A compositionally biased stretch (polar residues) spans 491–508; sequence ETSSPSKNTMSKPSNSSP. Phosphoserine is present on Ser-568. Disordered regions lie at residues 636-655 and 691-731; these read KGNS…DKQD and IIQN…NSDL. Residues 642–655 show a composition bias toward basic and acidic residues; the sequence is LHDDNKECNSDKQD. Residue Ser-729 is modified to Phosphoserine. One can recognise a BRCT domain in the interval 994–1122; that stretch reads RTGNVFDKCI…RIVPHLIYQY (129 aa).

As to quaternary structure, physically associates with RAD53.

The protein resides in the nucleus. Functionally, essential for cell cycle arrest at the G2 stage following DNA damage by X-irradiation or inactivation of DNA ligase. In Saccharomyces cerevisiae (strain ATCC 204508 / S288c) (Baker's yeast), this protein is DNA repair protein RAD9 (RAD9).